A 678-amino-acid chain; its full sequence is Alpha-L-arabinofuranosidase 1 (678 aa).

A signal peptide spans 1-33; the sequence is MDMESWKLLRSVCVLSFLLGSCFVYQSLRVVDA. The 88-residue stretch at 152–239 folds into the CBM-cenC domain; the sequence is NIEEGKKYKV…WIDQVSAMPV (88 aa). Residues N181, N362, N523, and N555 are each glycosylated (N-linked (GlcNAc...) asparagine).

It belongs to the glycosyl hydrolase 51 family. In terms of tissue distribution, expressed in roots, leaves, flowers, stems, siliques and seedlings. Observed in zones of cell proliferation, the vascular system and floral abscission zones. Expressed in the guard cells in stems, in xylem vessels and parenchyma cells surrounding the vessels, in the cambium and in the phloem, but not in the secondary xylem.

Its subcellular location is the secreted. It is found in the extracellular space. It localises to the extracellular matrix. The enzyme catalyses Hydrolysis of terminal non-reducing alpha-L-arabinofuranoside residues in alpha-L-arabinosides.. Functionally, may be involved in the coordinated dissolution of the cell wall matrix during abscission and in the secondary cell wall formation in xylem vessels. Prefers arabinoxylan, but may also use pectic arabinans as substrates. The sequence is that of Alpha-L-arabinofuranosidase 1 (ASD1) from Arabidopsis thaliana (Mouse-ear cress).